Here is a 215-residue protein sequence, read N- to C-terminus: UPF0502 protein YceH (215 aa).

This sequence belongs to the UPF0502 family.

In Salmonella schwarzengrund (strain CVM19633), this protein is UPF0502 protein YceH.